The primary structure comprises 291 residues: Elongation factor Ts (291 aa).

The tract at residues 80-83 (TDFV) is involved in Mg(2+) ion dislocation from EF-Tu.

This sequence belongs to the EF-Ts family.

It is found in the cytoplasm. Its function is as follows. Associates with the EF-Tu.GDP complex and induces the exchange of GDP to GTP. It remains bound to the aminoacyl-tRNA.EF-Tu.GTP complex up to the GTP hydrolysis stage on the ribosome. The protein is Elongation factor Ts of Acinetobacter baylyi (strain ATCC 33305 / BD413 / ADP1).